The primary structure comprises 345 residues: 4-hydroxy-2-oxovalerate aldolase 3 (345 aa).

The 253-residue stretch at 8–260 (ITVHDMTLRD…ETGVDVWKIQ (253 aa)) folds into the Pyruvate carboxyltransferase domain. 16–17 (RD) provides a ligand contact to substrate. Mn(2+) is bound at residue aspartate 17. Histidine 20 (proton acceptor) is an active-site residue. Positions 170 and 199 each coordinate substrate. Residues histidine 199 and histidine 201 each coordinate Mn(2+). Residue tyrosine 290 coordinates substrate.

Belongs to the 4-hydroxy-2-oxovalerate aldolase family.

It catalyses the reaction (S)-4-hydroxy-2-oxopentanoate = acetaldehyde + pyruvate. The chain is 4-hydroxy-2-oxovalerate aldolase 3 (aphG) from Comamonas testosteroni (Pseudomonas testosteroni).